A 658-amino-acid polypeptide reads, in one-letter code: Threonine--tRNA ligase (658 aa).

The region spanning 1 to 61 is the TGS domain; that stretch reads MSDVRVIIQR…RDGESVEPVE (61 aa). Residues 259-554 are catalytic; that stretch reads DHRKLGNELD…LLEHYAGAFP (296 aa). 3 residues coordinate Zn(2+): Cys353, His404, and His531.

This sequence belongs to the class-II aminoacyl-tRNA synthetase family. As to quaternary structure, homodimer. It depends on Zn(2+) as a cofactor.

The protein localises to the cytoplasm. The catalysed reaction is tRNA(Thr) + L-threonine + ATP = L-threonyl-tRNA(Thr) + AMP + diphosphate + H(+). Catalyzes the attachment of threonine to tRNA(Thr) in a two-step reaction: L-threonine is first activated by ATP to form Thr-AMP and then transferred to the acceptor end of tRNA(Thr). Also edits incorrectly charged L-seryl-tRNA(Thr). In Streptomyces griseus subsp. griseus (strain JCM 4626 / CBS 651.72 / NBRC 13350 / KCC S-0626 / ISP 5235), this protein is Threonine--tRNA ligase.